The primary structure comprises 344 residues: Phenylalanine--tRNA ligase alpha subunit (344 aa).

Glutamate 256 contributes to the Mg(2+) binding site.

It belongs to the class-II aminoacyl-tRNA synthetase family. Phe-tRNA synthetase alpha subunit type 1 subfamily. In terms of assembly, tetramer of two alpha and two beta subunits. Mg(2+) is required as a cofactor.

It localises to the cytoplasm. The catalysed reaction is tRNA(Phe) + L-phenylalanine + ATP = L-phenylalanyl-tRNA(Phe) + AMP + diphosphate + H(+). This chain is Phenylalanine--tRNA ligase alpha subunit, found in Onion yellows phytoplasma (strain OY-M).